The sequence spans 89 residues: Small ribosomal subunit protein bS18 (89 aa).

This sequence belongs to the bacterial ribosomal protein bS18 family. In terms of assembly, part of the 30S ribosomal subunit. Forms a tight heterodimer with protein bS6.

In terms of biological role, binds as a heterodimer with protein bS6 to the central domain of the 16S rRNA, where it helps stabilize the platform of the 30S subunit. This Parabacteroides distasonis (strain ATCC 8503 / DSM 20701 / CIP 104284 / JCM 5825 / NCTC 11152) protein is Small ribosomal subunit protein bS18.